We begin with the raw amino-acid sequence, 269 residues long: Zinc finger protein SNAI2 (269 aa).

The interval 1–20 (MPRSFLVKKHFNASKKPNYS) is SNAG domain. The tract at residues 81–117 (SSSLGRVSPPPSSDTSSKDHSGSESPISDEEERLQPK) is disordered. C2H2-type zinc fingers lie at residues 129–151 (FQCNLCNKTYSTFSGLAKHKQLH), 160–182 (FSCKYCDKEYVSLGALKMHIRTH), 186–208 (CVCKICGKAFSRPWLLQGHIRTH), and 214–236 (FSCPHCNRAFADRSNLRAHLQTH). A C2H2-type 5; atypical zinc finger spans residues 242–265 (YQCKNCSKTFSRMSLLHKHEESGC).

This sequence belongs to the snail C2H2-type zinc-finger protein family. Interacts (via SNAG domain) with LIMD1 (via LIM domains), WTIP (via LIM domains) and AJUBA (via LIM domains). Interacts (via zinc fingers) with KPNA2, KPNB1, and TNPO1. May interact (via zinc fingers) with IPO7. Post-translationally, phosphorylated by GSK3B. Once phosphorylated, it becomes a target for ubiquitination. In terms of processing, ubiquitinated by the SCF(FBXO11) complex; ubiquitination requires previous GSK3B-mediated SNAI2 phosphorylation.

It localises to the nucleus. The protein localises to the cytoplasm. Transcriptional repressor that modulates both activator-dependent and basal transcription. Involved in the generation and migration of neural crest cells. Plays a role in mediating RAF1-induced transcriptional repression of the TJ protein, occludin (OCLN) and subsequent oncogenic transformation of epithelial cells. Represses BRCA2 expression by binding to its E2-box-containing silencer and recruiting CTBP1 and HDAC1 in breast cells. In epidermal keratinocytes, binds to the E-box in ITGA3 promoter and represses its transcription. Involved in the regulation of ITGB1 and ITGB4 expression and cell adhesion and proliferation in epidermal keratinocytes. Binds to E-box2 domain of BSG and activates its expression during TGFB1-induced epithelial-mesenchymal transition (EMT) in hepatocytes. Represses E-Cadherin/CDH1 transcription via E-box elements. Involved in osteoblast maturation. Binds to RUNX2 and SOC9 promoters and may act as a positive and negative transcription regulator, respectively, in osteoblasts. Binds to CXCL12 promoter via E-box regions in mesenchymal stem cells and osteoblasts. Plays an essential role in TWIST1-induced EMT and its ability to promote invasion and metastasis. The protein is Zinc finger protein SNAI2 (Snai2) of Mus musculus (Mouse).